A 64-amino-acid chain; its full sequence is Cecropin-A (64 aa).

The signal sequence occupies residues 1-22 (MNFSRIFFFVFACLTALAMVNA). A propeptide spans 23-26 (APEP) (removed by a dipeptidylpeptidase). Lys-63 bears the Lysine amide mark.

It belongs to the cecropin family. Post-translationally, a protein with the same sequence as cecropin A, but lacking the carboxyl blocking group, has been isolated and called cecropin C.

It is found in the secreted. Functionally, cecropins have lytic and antibacterial activity against several Gram-positive and Gram-negative bacteria. The protein is Cecropin-A of Hyalophora cecropia (Cecropia moth).